A 131-amino-acid polypeptide reads, in one-letter code: Lymphocyte antigen 6C1 (131 aa).

The signal sequence occupies residues 1 to 26 (MDTSHTTKSCVLILLVALLCAERAQG). Residues 27–115 (LQCYECYGVP…PTAGSTWTMA (89 aa)) form the UPAR/Ly6 domain. Intrachain disulfides connect cysteine 29–cysteine 53, cysteine 32–cysteine 41, cysteine 46–cysteine 74, cysteine 78–cysteine 95, and cysteine 96–cysteine 101. A lipid anchor (GPI-anchor amidated glycine) is attached at glycine 109. A propeptide spans 110–131 (STWTMAGVLLFSLSSVVLQTLL) (removed in mature form).

It is found in the cell membrane. This is Lymphocyte antigen 6C1 (Ly6c1) from Mus musculus (Mouse).